The sequence spans 356 residues: DNA polymerase IV (356 aa).

One can recognise a UmuC domain in the interval 1–188; that stretch reads MDTSRKIIHI…IPVTKFYGVG (188 aa). Positions 11 and 106 each coordinate Mg(2+). The active site involves glutamate 107.

This sequence belongs to the DNA polymerase type-Y family. Monomer. Requires Mg(2+) as cofactor.

It is found in the cytoplasm. The catalysed reaction is DNA(n) + a 2'-deoxyribonucleoside 5'-triphosphate = DNA(n+1) + diphosphate. Poorly processive, error-prone DNA polymerase involved in untargeted mutagenesis. Copies undamaged DNA at stalled replication forks, which arise in vivo from mismatched or misaligned primer ends. These misaligned primers can be extended by PolIV. Exhibits no 3'-5' exonuclease (proofreading) activity. May be involved in translesional synthesis, in conjunction with the beta clamp from PolIII. The polypeptide is DNA polymerase IV (Listeria innocua serovar 6a (strain ATCC BAA-680 / CLIP 11262)).